The chain runs to 179 residues: Cell division protein ZapC (179 aa).

It belongs to the ZapC family. In terms of assembly, interacts directly with FtsZ.

The protein resides in the cytoplasm. Its function is as follows. Contributes to the efficiency of the cell division process by stabilizing the polymeric form of the cell division protein FtsZ. Acts by promoting interactions between FtsZ protofilaments and suppressing the GTPase activity of FtsZ. This is Cell division protein ZapC from Tolumonas auensis (strain DSM 9187 / NBRC 110442 / TA 4).